An 840-amino-acid chain; its full sequence is Protein translocase subunit SecA (840 aa).

ATP-binding positions include Gln87, 105-109, and Asp494; that span reads GEGKT. A disordered region spans residues 518-537; that stretch reads RRIDNQLRGRSGRQGDPGSS. Residues Cys826, Cys828, Cys837, and Cys838 each contribute to the Zn(2+) site.

The protein belongs to the SecA family. Monomer and homodimer. Part of the essential Sec protein translocation apparatus which comprises SecA, SecYEG and auxiliary proteins SecDF-YajC and YidC. Requires Zn(2+) as cofactor.

The protein resides in the cell inner membrane. Its subcellular location is the cytoplasm. It catalyses the reaction ATP + H2O + cellular proteinSide 1 = ADP + phosphate + cellular proteinSide 2.. In terms of biological role, part of the Sec protein translocase complex. Interacts with the SecYEG preprotein conducting channel. Has a central role in coupling the hydrolysis of ATP to the transfer of proteins into and across the cell membrane, serving as an ATP-driven molecular motor driving the stepwise translocation of polypeptide chains across the membrane. This chain is Protein translocase subunit SecA, found in Desulforapulum autotrophicum (strain ATCC 43914 / DSM 3382 / VKM B-1955 / HRM2) (Desulfobacterium autotrophicum).